The chain runs to 403 residues: S-adenosylmethionine sensor upstream of mTORC1 (403 aa).

Residues 1 to 10 (MEPGPGGRGA) are compositionally biased toward gly residues. Residues 1–32 (MEPGPGGRGAARGQRPPNAAQPREQERKLEQE) form a disordered region. A compositionally biased stretch (low complexity) spans 11 to 22 (ARGQRPPNAAQP). Residues 23-32 (REQERKLEQE) show a composition bias toward basic and acidic residues. S-adenosyl-L-methionine contacts are provided by arginine 93, glycine 170, aspartate 188, aspartate 200, phenylalanine 201, and serine 242.

The protein belongs to the BMT2/SAMTOR family. As to quaternary structure, interacts with the GATOR1 complex; interaction is disrupted when SAMTOR binds S-adenosyl-L-methionine. Interacts with the KICSTOR complex; interaction is disrupted when SAMTOR binds S-adenosyl-L-methionine.

In terms of biological role, S-adenosyl-L-methionine-binding protein that acts as an inhibitor of mTORC1 signaling via interaction with the GATOR1 and KICSTOR complexes. Acts as a sensor of S-adenosyl-L-methionine to signal methionine sufficiency to mTORC1: in presence of methionine, binds S-adenosyl-L-methionine, leading to disrupt interaction with the GATOR1 and KICSTOR complexes and promote mTORC1 signaling. Upon methionine starvation, S-adenosyl-L-methionine levels are reduced, thereby promoting the association with GATOR1 and KICSTOR, leading to inhibit mTORC1 signaling. Probably also acts as a S-adenosyl-L-methionine-dependent methyltransferase. This Mus musculus (Mouse) protein is S-adenosylmethionine sensor upstream of mTORC1.